A 239-amino-acid polypeptide reads, in one-letter code: Ribosomal RNA small subunit methyltransferase G (239 aa).

S-adenosyl-L-methionine contacts are provided by residues glycine 78, phenylalanine 83, 129–130 (AE), and arginine 148.

The protein belongs to the methyltransferase superfamily. RNA methyltransferase RsmG family.

Its subcellular location is the cytoplasm. Its function is as follows. Specifically methylates the N7 position of a guanine in 16S rRNA. The protein is Ribosomal RNA small subunit methyltransferase G of Clostridium botulinum (strain Eklund 17B / Type B).